The chain runs to 1548 residues: Multidrug resistance protein (1548 aa).

Over 1–238 (MVDNGHVTIA…YHVWAQILPK (238 aa)) the chain is Cytoplasmic. Residues 231 to 514 (VWAQILPKLL…IPIIISSILQ (284 aa)) form the ABC transmembrane type-1 1 domain. A helical transmembrane segment spans residues 239-256 (LLSDVTALMLPVLLEYFV). N263 carries an N-linked (GlcNAc...) asparagine glycan. 5 helical membrane passes run 266-287 (WGWGLGLALTIFLTNVIQSCSA), 349-367 (VMYFWSAPLQLVLCLLLLI), 375-392 (VPGMAVLFVTLPLQAVIS), 463-480 (ATPTLVIAVVFILYHVSG), and 500-519 (VSFFMIPIIISSILQCFVSA). Residues 520–932 (KRVTAFIECP…PWSTYVAYLK (413 aa)) lie on the Cytoplasmic side of the membrane. The ABC transporter 1 domain maps to 634–855 (VEEGDREYYQ…ALEETLRGEL (222 aa)). 667 to 674 (GSTGSGKS) serves as a coordination point for ATP. 4 consecutive transmembrane segments (helical) span residues 933-950 (SCGGLEAWGCLLATFALT), 975-993 (TYLYVYLFIVFLEIFGSPL), 1051-1070 (GYLYLLEYFFSMCSTVIIMV), and 1072-1088 (VQPFVLVAIVPCVYSYY). An ABC transmembrane type-1 2 domain is found at 940 to 1221 (WGCLLATFAL…LVRQVAMVEA (282 aa)). Residues N1095 and N1154 are each glycosylated (N-linked (GlcNAc...) asparagine). The next 2 membrane-spanning stretches (helical) occupy residues 1164-1182 (LEFLSCVVTFMVAFIGVIG) and 1186-1205 (GASSQNIGLISLSLTMSMTL). Residues 1206–1548 (TETLNWLVRQ…RIVQPAVLSD (343 aa)) lie on the Cytoplasmic side of the membrane. Residues 1286 to 1521 (LVLEGVQMRY…HQSMFHSMVE (236 aa)) form the ABC transporter 2 domain. 1320–1327 (GRTGSGKS) lines the ATP pocket.

The protein belongs to the ABC transporter superfamily. ABCB family. Multidrug resistance exporter (TC 3.A.1.201) subfamily.

The protein localises to the membrane. The enzyme catalyses ATP + H2O + xenobioticSide 1 = ADP + phosphate + xenobioticSide 2.. The protein is Multidrug resistance protein (PGPA) of Leishmania tarentolae (Sauroleishmania tarentolae).